The primary structure comprises 313 residues: Solute carrier family 35 member E3 (313 aa).

9 helical membrane passes run 17–37, 40–60, 71–91, 126–146, 154–174, 187–206, 225–245, 252–272, and 275–295; these read GLLFNLLVSICIVFLNKWIYV, GFPNMSLTLVHFVVTWLGLYI, SLPLSKLLLLALSFCGFVVFT, FSVRIQLTLIPITVGVILNSY, LGMVFAALGVVVTSLYQVWVG, LLYYQAPMSSAMLLVAVPFF, LMVLLSGIIAFMVNLSIYWII, TYNMFGHFKFCITLCGGYILF, and PLSVNQGLGILCTLFGILTYT.

Belongs to the TPT transporter family. SLC35E subfamily.

Its subcellular location is the membrane. Putative transporter. The sequence is that of Solute carrier family 35 member E3 (Slc35e3) from Mus musculus (Mouse).